A 315-amino-acid polypeptide reads, in one-letter code: Adenine deaminase (315 aa).

Residues histidine 14, histidine 16, and histidine 194 each contribute to the Zn(2+) site. The active-site Proton donor is glutamate 197. Zn(2+) is bound at residue aspartate 275. A substrate-binding site is contributed by aspartate 276.

It belongs to the metallo-dependent hydrolases superfamily. Adenosine and AMP deaminases family. Adenine deaminase type 2 subfamily. Zn(2+) is required as a cofactor.

The catalysed reaction is adenine + H2O + H(+) = hypoxanthine + NH4(+). Catalyzes the hydrolytic deamination of adenine to hypoxanthine. Plays an important role in the purine salvage pathway and in nitrogen catabolism. The polypeptide is Adenine deaminase (Pseudomonas putida (strain GB-1)).